The chain runs to 300 residues: Probable alpha-L-glutamate ligase (300 aa).

The region spanning 104–287 (LQLLARQGID…IAGRMIQWIE (184 aa)) is the ATP-grasp domain. Residues lysine 141, 178–179 (EY), aspartate 187, and 211–213 (RSN) contribute to the ATP site. Positions 248, 260, and 262 each coordinate Mg(2+). Mn(2+)-binding residues include aspartate 248, glutamate 260, and asparagine 262.

It belongs to the RimK family. Requires Mg(2+) as cofactor. Mn(2+) is required as a cofactor.

This chain is Probable alpha-L-glutamate ligase, found in Citrobacter koseri (strain ATCC BAA-895 / CDC 4225-83 / SGSC4696).